The following is a 181-amino-acid chain: Large ribosomal subunit protein uL5 (181 aa).

Belongs to the universal ribosomal protein uL5 family. Part of the 50S ribosomal subunit; part of the 5S rRNA/L5/L18/L25 subcomplex. Contacts the 5S rRNA and the P site tRNA. Forms a bridge to the 30S subunit in the 70S ribosome.

This is one of the proteins that bind and probably mediate the attachment of the 5S RNA into the large ribosomal subunit, where it forms part of the central protuberance. In the 70S ribosome it contacts protein S13 of the 30S subunit (bridge B1b), connecting the 2 subunits; this bridge is implicated in subunit movement. Contacts the P site tRNA; the 5S rRNA and some of its associated proteins might help stabilize positioning of ribosome-bound tRNAs. The protein is Large ribosomal subunit protein uL5 of Helicobacter pylori (strain ATCC 700392 / 26695) (Campylobacter pylori).